The sequence spans 419 residues: Transcription termination factor Rho (419 aa).

Positions glycine 48–histidine 123 constitute a Rho RNA-BD domain. ATP-binding positions include glycine 169 to alanine 174, lysine 181 to valine 186, and arginine 212.

This sequence belongs to the Rho family. In terms of assembly, homohexamer. The homohexamer assembles into an open ring structure.

In terms of biological role, facilitates transcription termination by a mechanism that involves Rho binding to the nascent RNA, activation of Rho's RNA-dependent ATPase activity, and release of the mRNA from the DNA template. The polypeptide is Transcription termination factor Rho (Neisseria gonorrhoeae).